The sequence spans 1028 residues: Multidrug resistance protein MdtC (1028 aa).

12 helical membrane passes run 3–23 (FFAL…AITL), 333–353 (EVEQ…FLFL), 360–380 (LIPA…MYLC), 387–407 (LSLM…IVVL), 431–451 (VGFT…PLLL), 463–483 (FAVT…TLTP), 528–548 (LVGV…ISIP), 853–873 (VILI…LYES), 875–895 (VHPL…LLAL), 897–917 (LFNA…IGIV), 953–973 (PIMM…ISGG), and 984–1004 (ITIV…TPVV).

This sequence belongs to the resistance-nodulation-cell division (RND) (TC 2.A.6) family. MdtC subfamily. In terms of assembly, part of a tripartite efflux system composed of MdtA, MdtB and MdtC. MdtC forms a heteromultimer with MdtB.

It localises to the cell inner membrane. This is Multidrug resistance protein MdtC from Citrobacter koseri (strain ATCC BAA-895 / CDC 4225-83 / SGSC4696).